A 419-amino-acid polypeptide reads, in one-letter code: DNA ligase (419 aa).

The NTD stretch occupies residues 1–120 (MLNQFPGQLS…ARQKRGAHTN (120 aa)). The interval 121-317 (RGMIPPMLVK…NYHSPHLAKL (197 aa)) is AD domain. The active-site N6-AMP-lysine intermediate is lysine 151. Residues 318–419 (KPLLDAEFIL…REPINVLEII (102 aa)) are OB domain.

Belongs to the ATP-dependent DNA ligase family.

It localises to the virion. It catalyses the reaction ATP + (deoxyribonucleotide)n-3'-hydroxyl + 5'-phospho-(deoxyribonucleotide)m = (deoxyribonucleotide)n+m + AMP + diphosphate.. Functionally, very low-fidelity DNA ligase that seals nicks in double-stranded DNA during DNA repair. Together with the viral repair DNA polymerase X, fills the single nucleotide gaps generated by the AP endonuclease. It is not essential for viral replication and recombination. Displays a very low adenylation activity towards DNA with 3'-dideoxy- or 3'-amino-terminated nicks compared to regular nick DNA. This is DNA ligase from Ornithodoros (relapsing fever ticks).